The primary structure comprises 194 residues: Peptidyl-tRNA hydrolase (194 aa).

Position 17 (Tyr-17) interacts with tRNA. The Proton acceptor role is filled by His-22. TRNA is bound by residues Phe-68, Asn-70, and Asn-116.

The protein belongs to the PTH family. As to quaternary structure, monomer.

It is found in the cytoplasm. The enzyme catalyses an N-acyl-L-alpha-aminoacyl-tRNA + H2O = an N-acyl-L-amino acid + a tRNA + H(+). Functionally, hydrolyzes ribosome-free peptidyl-tRNAs (with 1 or more amino acids incorporated), which drop off the ribosome during protein synthesis, or as a result of ribosome stalling. Catalyzes the release of premature peptidyl moieties from peptidyl-tRNA molecules trapped in stalled 50S ribosomal subunits, and thus maintains levels of free tRNAs and 50S ribosomes. The sequence is that of Peptidyl-tRNA hydrolase from Shewanella halifaxensis (strain HAW-EB4).